The following is a 368-amino-acid chain: MSVQIPVALPQNAYEIAIANGGLAAAGTWLQQADLKAGTKLLIVTNPAIGRRYGDRLVAALQEAGFIVDCLTLPAGERYKTPATVQRIYDKALELRLERRSALVALGGGVIGDMTGFAAATWLRGISFVQIPTSLLAMVDASIGGKTGVNHPRGKNLIGAFHQPKLVLIDPETLQTLPVREFRAGMAEVIKYGVIWDRDLFERLEASPFLDRPRSLPANLLTLILERSCRAKAEVVAKDEKESGLRAILNYGHTIGHAVESLTGYRIVNHGEAVAIGMVAAGRLAVALGLWNQDECDRQEAVIAKAGLPTRLPEGIDQAAIVEALQLDKKVQAGKVRFILPTTLGHVTITDQVPSQTLQEVLQAIANP.

NAD(+)-binding positions include 109–113 (GVIGD), 133–134 (TS), Lys-146, Lys-155, and 173–176 (TLQT). Residues Glu-188, His-253, and His-270 each contribute to the Zn(2+) site.

Belongs to the sugar phosphate cyclases superfamily. Dehydroquinate synthase family. Co(2+) serves as cofactor. Zn(2+) is required as a cofactor. The cofactor is NAD(+).

The protein resides in the cytoplasm. It carries out the reaction 7-phospho-2-dehydro-3-deoxy-D-arabino-heptonate = 3-dehydroquinate + phosphate. It participates in metabolic intermediate biosynthesis; chorismate biosynthesis; chorismate from D-erythrose 4-phosphate and phosphoenolpyruvate: step 2/7. In terms of biological role, catalyzes the conversion of 3-deoxy-D-arabino-heptulosonate 7-phosphate (DAHP) to dehydroquinate (DHQ). This Synechococcus sp. (strain ATCC 27144 / PCC 6301 / SAUG 1402/1) (Anacystis nidulans) protein is 3-dehydroquinate synthase.